Here is a 257-residue protein sequence, read N- to C-terminus: UPF0246 protein Sbal223_3241 (257 aa).

It belongs to the UPF0246 family.

In Shewanella baltica (strain OS223), this protein is UPF0246 protein Sbal223_3241.